The chain runs to 593 residues: Meiosis-specific APC/C activator protein AMA1 (593 aa).

Positions 1–11 (MATPHLYHRYN) are enriched in basic residues. Positions 1–26 (MATPHLYHRYNSKSSNKNINSSGNST) are disordered. Positions 12–25 (SKSSNKNINSSGNS) are enriched in low complexity. The C-box signature appears at 29–35 (DRFIPKS). The segment covering 94-109 (SSISSSSESQVTRSGS) has biased composition (low complexity). The interval 94 to 125 (SSISSSSESQVTRSGSARASRNDYSKLTKEQK) is disordered. Over residues 113-125 (SRNDYSKLTKEQK) the composition is skewed to basic and acidic residues. 6 WD repeats span residues 226 to 264 (RNDF…VSIL), 271 to 310 (EKRD…HSSN), 323 to 364 (ESFK…FPIK), 388 to 427 (AQAQ…KPIK), 432 to 474 (PHKA…LLDE), and 525 to 564 (PNPL…EEII).

It belongs to the WD repeat CDC20/Fizzy family. In terms of assembly, interacts with CDC16.

Activator protein that regulates the ubiquitin ligase activity and substrate specificity of the anaphase promoting complex/cyclosome (APC/C). Required for the ubiquitination and subsequent degradation of the B-type cyclin CLB1 by the APC/C complex during meiosis. Required for meiosis I, late meiotic gene expression and spore wall assembly. This chain is Meiosis-specific APC/C activator protein AMA1 (AMA1), found in Saccharomyces cerevisiae (strain ATCC 204508 / S288c) (Baker's yeast).